A 605-amino-acid chain; its full sequence is Glucose oxidase (605 aa).

The N-terminal stretch at 1-18 (MVSVFLSTLLLAAATVQA) is a signal peptide. Positions 52, 53, and 73 each coordinate FAD. An N-linked (GlcNAc...) asparagine glycan is attached at N111. Positions 125, 129, 130, and 132 each coordinate FAD. N183 and N190 each carry an N-linked (GlcNAc...) asparagine glycan. A disulfide bridge connects residues C186 and C228. FAD is bound at residue V272. N335, N375, N410, and N519 each carry an N-linked (GlcNAc...) asparagine glycan. H538 (proton acceptor) is an active-site residue. Residues K559 and V560 each coordinate O2. FAD-binding residues include G571 and M583.

It belongs to the GMC oxidoreductase family. Homodimer. Requires FAD as cofactor.

The protein resides in the secreted. It localises to the cell wall. It is found in the cytoplasmic vesicle. It carries out the reaction beta-D-glucose + O2 = D-glucono-1,5-lactone + H2O2. Functionally, glucose oxidase catalyzes the oxidation of beta-D-glucose to D-glucono-delta-lactone and hydrogen peroxide in the presence of molecular oxygen. D-glucono-delta-lactone is sequentially hydrolyzed by lactonase to D-gluconic acid, and the resulting hydrogen peroxide is hydrolyzed by catalase to oxygen and water. Glucose oxidase alone indirectly causes toxicity in the presence of glucose and is the active compound of the antifungal antibiotic talaron. Responsible for inhibition of germination of microsclerotia of Verticillium dahliae. In Talaromyces flavus, this protein is Glucose oxidase.